Reading from the N-terminus, the 181-residue chain is Ribosome-recycling factor (181 aa).

Belongs to the RRF family.

It is found in the cytoplasm. Functionally, responsible for the release of ribosomes from messenger RNA at the termination of protein biosynthesis. May increase the efficiency of translation by recycling ribosomes from one round of translation to another. This chain is Ribosome-recycling factor, found in Tropheryma whipplei (strain TW08/27) (Whipple's bacillus).